The chain runs to 469 residues: Putative arginine/ornithine antiporter (469 aa).

The next 12 membrane-spanning stretches (helical) occupy residues 8-28 (GFWL…IFSL), 44-64 (AWLL…HLSI), 90-110 (AGFT…VAII), 144-164 (LTFA…VASI), 179-199 (VLGF…SLFG), 213-233 (IGIG…FVGI), 254-274 (ITGL…TMGV), 301-321 (VIMA…WILL), 347-367 (SPVI…FSVI), 375-395 (FTFL…VSAI), 417-437 (DGLI…TGTA), and 439-459 (LTTF…YPFV).

It belongs to the amino acid-polyamine-organocation (APC) superfamily. Basic amino acid/polyamine antiporter (APA) (TC 2.A.3.2) family.

It is found in the cell membrane. The catalysed reaction is L-ornithine(in) + L-arginine(out) = L-ornithine(out) + L-arginine(in). Catalyzes electroneutral exchange between L-arginine and L-ornithine. The polypeptide is Putative arginine/ornithine antiporter (yvsH) (Bacillus subtilis (strain 168)).